The following is a 936-amino-acid chain: Isoleucine--tRNA ligase (936 aa).

A 'HIGH' region motif is present at residues 58–68 (PYANGRAHLGT). Glutamate 561 contributes to the L-isoleucyl-5'-AMP binding site. A 'KMSKS' region motif is present at residues 602–606 (KMSKS). Lysine 605 is an ATP binding site. Positions 899, 902, 919, and 922 each coordinate Zn(2+).

This sequence belongs to the class-I aminoacyl-tRNA synthetase family. IleS type 1 subfamily. As to quaternary structure, monomer. Requires Zn(2+) as cofactor.

The protein resides in the cytoplasm. The enzyme catalyses tRNA(Ile) + L-isoleucine + ATP = L-isoleucyl-tRNA(Ile) + AMP + diphosphate. Catalyzes the attachment of isoleucine to tRNA(Ile). As IleRS can inadvertently accommodate and process structurally similar amino acids such as valine, to avoid such errors it has two additional distinct tRNA(Ile)-dependent editing activities. One activity is designated as 'pretransfer' editing and involves the hydrolysis of activated Val-AMP. The other activity is designated 'posttransfer' editing and involves deacylation of mischarged Val-tRNA(Ile). This chain is Isoleucine--tRNA ligase, found in Coxiella burnetii (strain CbuG_Q212) (Coxiella burnetii (strain Q212)).